The chain runs to 284 residues: 2-dehydro-3-deoxyphosphooctonate aldolase (284 aa).

The protein belongs to the KdsA family.

It is found in the cytoplasm. It catalyses the reaction D-arabinose 5-phosphate + phosphoenolpyruvate + H2O = 3-deoxy-alpha-D-manno-2-octulosonate-8-phosphate + phosphate. Its pathway is carbohydrate biosynthesis; 3-deoxy-D-manno-octulosonate biosynthesis; 3-deoxy-D-manno-octulosonate from D-ribulose 5-phosphate: step 2/3. The protein operates within bacterial outer membrane biogenesis; lipopolysaccharide biosynthesis. The sequence is that of 2-dehydro-3-deoxyphosphooctonate aldolase from Burkholderia mallei (strain NCTC 10247).